Here is a 451-residue protein sequence, read N- to C-terminus: uncharacterized protein (451 aa).

A run of 11 helical transmembrane segments spans residues I13–P33, G41–V61, A97–V117, N142–A162, A174–L194, I217–T237, I255–F275, L299–T319, W345–L365, F381–L401, and L429–L449.

Belongs to the sodium:neurotransmitter symporter (SNF) (TC 2.A.22) family.

It is found in the cell membrane. Putative sodium-dependent transporter. This is an uncharacterized protein from Bacillus subtilis (strain 168).